The following is a 366-amino-acid chain: Flagellar P-ring protein (366 aa).

A signal peptide spans 1 to 20 (MVIKFLSALILLLVTTAAQA).

Belongs to the FlgI family. As to quaternary structure, the basal body constitutes a major portion of the flagellar organelle and consists of four rings (L,P,S, and M) mounted on a central rod.

The protein resides in the periplasm. Its subcellular location is the bacterial flagellum basal body. Its function is as follows. Assembles around the rod to form the L-ring and probably protects the motor/basal body from shearing forces during rotation. The sequence is that of Flagellar P-ring protein from Escherichia coli (strain SE11).